The chain runs to 726 residues: Catalase-peroxidase (726 aa).

The disordered stretch occupies residues 1–33 (MSTTDDTHNTLSAGKCPFHQGGHDRSAGAGTAS). A cross-link (tryptophyl-tyrosyl-methioninium (Trp-Tyr) (with M-252)) is located at residues 105-226 (WHGAGTYRSI…LGATEMGLIY (122 aa)). The active-site Proton acceptor is His106. Positions 226-252 (YVNPEGPDHSGEPLSAAAAIRATFGNM) form a cross-link, tryptophyl-tyrosyl-methioninium (Tyr-Met) (with W-105). His267 lines the heme b pocket.

Belongs to the peroxidase family. Peroxidase/catalase subfamily. As to quaternary structure, homodimer or homotetramer. Heme b serves as cofactor. In terms of processing, formation of the three residue Trp-Tyr-Met cross-link is important for the catalase, but not the peroxidase activity of the enzyme.

The enzyme catalyses H2O2 + AH2 = A + 2 H2O. It catalyses the reaction 2 H2O2 = O2 + 2 H2O. Its function is as follows. Bifunctional enzyme with both catalase and broad-spectrum peroxidase activity. The polypeptide is Catalase-peroxidase (Salmonella arizonae (strain ATCC BAA-731 / CDC346-86 / RSK2980)).